The primary structure comprises 333 residues: Anthranilate phosphoribosyltransferase (333 aa).

Residues G81, G84–D85, T89, N91–T94, K109–S117, and S121 each bind 5-phospho-alpha-D-ribose 1-diphosphate. Anthranilate is bound at residue G81. S93 serves as a coordination point for Mg(2+). N112 is an anthranilate binding site. Position 167 (R167) interacts with anthranilate. Mg(2+) contacts are provided by D225 and E226.

This sequence belongs to the anthranilate phosphoribosyltransferase family. Homodimer. It depends on Mg(2+) as a cofactor.

It catalyses the reaction N-(5-phospho-beta-D-ribosyl)anthranilate + diphosphate = 5-phospho-alpha-D-ribose 1-diphosphate + anthranilate. The protein operates within amino-acid biosynthesis; L-tryptophan biosynthesis; L-tryptophan from chorismate: step 2/5. Functionally, catalyzes the transfer of the phosphoribosyl group of 5-phosphorylribose-1-pyrophosphate (PRPP) to anthranilate to yield N-(5'-phosphoribosyl)-anthranilate (PRA). The chain is Anthranilate phosphoribosyltransferase from Glaesserella parasuis serovar 5 (strain SH0165) (Haemophilus parasuis).